We begin with the raw amino-acid sequence, 390 residues long: Phosphoglycerate kinase (390 aa).

Substrate is bound by residues 21–23 (DLN), arginine 36, 59–62 (HLGR), arginine 114, and arginine 147. Residues lysine 198, glutamate 314, and 340 to 343 (GGDT) contribute to the ATP site.

Belongs to the phosphoglycerate kinase family. Monomer.

It localises to the cytoplasm. It carries out the reaction (2R)-3-phosphoglycerate + ATP = (2R)-3-phospho-glyceroyl phosphate + ADP. It functions in the pathway carbohydrate degradation; glycolysis; pyruvate from D-glyceraldehyde 3-phosphate: step 2/5. The sequence is that of Phosphoglycerate kinase (pgk) from Buchnera aphidicola subsp. Acyrthosiphon pisum (strain APS) (Acyrthosiphon pisum symbiotic bacterium).